We begin with the raw amino-acid sequence, 347 residues long: CDK2-associated and cullin domain-containing protein 1 (347 aa).

A compositionally biased stretch (acidic residues) spans 1–11 (MEESMEEEEML). 2 disordered regions span residues 1–63 (MEES…LPGG) and 320–347 (RGDQ…RGYR). Pro residues predominate over residues 34–49 (QPPPAPPLPPPPPPRP).

The protein belongs to the cullin family. In terms of assembly, interacts with CDK2.

In terms of biological role, cell cycle associated protein capable of promoting cell proliferation through the activation of CDK2 at the G1/S phase transition. This chain is CDK2-associated and cullin domain-containing protein 1 (Cacul1), found in Rattus norvegicus (Rat).